Reading from the N-terminus, the 292-residue chain is Protoheme IX farnesyltransferase (292 aa).

A run of 8 helical transmembrane segments spans residues 15-35 (YLVLTKPGIVSLVLITTLGGM), 49-69 (FWTLLGTGLAAAGSAVLNMVI), 104-124 (VFSLVIMLTFVGVLPALLVAL), 147-167 (IGGISGALPPVIGYVAASGSV), 171-191 (AIALFLLMFMWQPPHFWVLAL), 218-238 (TLLYTASLFPVSLIPYLTGLV), 242-262 (YFVVAVVMNLIYLGLTLKFFF), and 271-291 (LFFFSIIYLAVLFGTMIVDMV).

It belongs to the UbiA prenyltransferase family. Protoheme IX farnesyltransferase subfamily.

Its subcellular location is the cell inner membrane. The catalysed reaction is heme b + (2E,6E)-farnesyl diphosphate + H2O = Fe(II)-heme o + diphosphate. It participates in porphyrin-containing compound metabolism; heme O biosynthesis; heme O from protoheme: step 1/1. Its function is as follows. Converts heme B (protoheme IX) to heme O by substitution of the vinyl group on carbon 2 of heme B porphyrin ring with a hydroxyethyl farnesyl side group. The protein is Protoheme IX farnesyltransferase of Aquifex aeolicus (strain VF5).